Here is a 224-residue protein sequence, read N- to C-terminus: Iron-sulfur cluster repair protein ScdA (224 aa).

It belongs to the RIC family. ScdA subfamily. As to quaternary structure, homodimer.

The protein resides in the cytoplasm. In terms of biological role, di-iron-containing protein involved in the repair of iron-sulfur clusters damaged by oxidative and nitrosative stress conditions. The polypeptide is Iron-sulfur cluster repair protein ScdA (Staphylococcus epidermidis (strain ATCC 35984 / DSM 28319 / BCRC 17069 / CCUG 31568 / BM 3577 / RP62A)).